The sequence spans 157 residues: Endoribonuclease YbeY (157 aa).

Zn(2+)-binding residues include His-114, His-118, and His-124.

The protein belongs to the endoribonuclease YbeY family. It depends on Zn(2+) as a cofactor.

Its subcellular location is the cytoplasm. Single strand-specific metallo-endoribonuclease involved in late-stage 70S ribosome quality control and in maturation of the 3' terminus of the 16S rRNA. The polypeptide is Endoribonuclease YbeY (Yersinia pseudotuberculosis serotype O:1b (strain IP 31758)).